Consider the following 498-residue polypeptide: Probable lysophospholipase BODYGUARD 3 (498 aa).

A signal peptide spans 1-55 (MAVMKIKGAATVAGTWLNEAVSFVVFCILDIVDSFLCLLYKAADYLFEAEWKPCY). Cys-56 carries N-palmitoyl cysteine lipidation. An AB hydrolase-1 domain is found at 220 to 326 (VLFIHGFISS…LTLLAPPYYP (107 aa)). Residue His-224 is part of the active site. The active-site Nucleophile is the Ser-297. Active-site charge relay system residues include Asp-446 and His-474.

The protein resides in the cell membrane. Its subcellular location is the secreted. It is found in the cell wall. Its function is as follows. Involved in cuticle development and morphogenesis. The protein is Probable lysophospholipase BODYGUARD 3 of Arabidopsis thaliana (Mouse-ear cress).